Consider the following 290-residue polypeptide: Glyceraldehyde-3-phosphate dehydrogenase (290 aa).

Positions 13 and 58 each coordinate NAD(+). D-glyceraldehyde 3-phosphate is bound by residues 129–131, Thr160, 189–190, and Arg212; these read SCT and TG. Residue Cys130 is the Nucleophile of the active site.

It belongs to the glyceraldehyde-3-phosphate dehydrogenase family. In terms of assembly, homotetramer.

It is found in the cytoplasm. It catalyses the reaction D-glyceraldehyde 3-phosphate + phosphate + NAD(+) = (2R)-3-phospho-glyceroyl phosphate + NADH + H(+). It participates in carbohydrate degradation; glycolysis; pyruvate from D-glyceraldehyde 3-phosphate: step 1/5. The sequence is that of Glyceraldehyde-3-phosphate dehydrogenase (GPD) from Lactarius deterrimus (False saffron milkcap).